The chain runs to 450 residues: Ribosomal protein uS12 methylthiotransferase RimO (450 aa).

Positions 10–125 (SRIALVSLGC…VVDIVRRAAT (116 aa)) constitute an MTTase N-terminal domain. Residues cysteine 19, cysteine 54, cysteine 88, cysteine 162, cysteine 166, and cysteine 169 each contribute to the [4Fe-4S] cluster site. In terms of domain architecture, Radical SAM core spans 148 to 378 (SGSPFTAYLK…AAVQREVSRA (231 aa)). The TRAM domain occupies 381–447 (RARVGSEVTV…PYDLRARVLS (67 aa)).

This sequence belongs to the methylthiotransferase family. RimO subfamily. [4Fe-4S] cluster serves as cofactor.

It localises to the cytoplasm. The enzyme catalyses L-aspartate(89)-[ribosomal protein uS12]-hydrogen + (sulfur carrier)-SH + AH2 + 2 S-adenosyl-L-methionine = 3-methylsulfanyl-L-aspartate(89)-[ribosomal protein uS12]-hydrogen + (sulfur carrier)-H + 5'-deoxyadenosine + L-methionine + A + S-adenosyl-L-homocysteine + 2 H(+). Catalyzes the methylthiolation of an aspartic acid residue of ribosomal protein uS12. This is Ribosomal protein uS12 methylthiotransferase RimO from Desulforudis audaxviator (strain MP104C).